The primary structure comprises 155 residues: DNA gyrase inhibitor (155 aa).

Belongs to the DNA gyrase inhibitor family. In terms of assembly, interacts with DNA gyrase.

Its subcellular location is the cytoplasm. In terms of biological role, inhibits the supercoiling activity of DNA gyrase. Acts by inhibiting DNA gyrase at an early step, prior to (or at the step of) binding of DNA by the gyrase. It protects cells against toxins that target DNA gyrase, by inhibiting activity of these toxins and reducing the formation of lethal double-strand breaks in the cell. This chain is DNA gyrase inhibitor, found in Edwardsiella ictaluri (strain 93-146).